The sequence spans 1052 residues: SE-cephalotoxin (1052 aa).

A signal peptide spans 1 to 21 (MMGTSRCVILLFALLLWAANA). Residues 22–29 (APPEIHTT) constitute a propeptide that is removed on maturation. N-linked (GlcNAc...) asparagine glycosylation occurs at Asn41. Residues 130 to 194 (TGVNRKLDQI…DMNKRRLMAE (65 aa)) are a coiled coil. The N-linked (GlcNAc...) asparagine glycan is linked to Asn353. The EGF-like domain maps to 460 to 497 (PGNPCNHGCNGHGECKVVPYTDQFQCFCHGNYEGKMCQ). 3 cysteine pairs are disulfide-bonded: Cys464–Cys474, Cys468–Cys485, and Cys487–Cys496. Residues Asn576 and Asn715 are each glycosylated (N-linked (GlcNAc...) asparagine). The Sushi domain maps to 709 to 769 (TSCPPLNVTH…QWSATPKCES (61 aa)). Disulfide bonds link Cys711–Cys752, Cys739–Cys767, Cys780–Cys814, Cys784–Cys820, Cys795–Cys804, Cys829–Cys847, and Cys841–Cys858. In terms of domain architecture, TSP type-1 spans 768 to 821 (ESSWSRWSKWSACASTCGNATQSRRRRCLGQSESEKCIGPSKQVRKCFVEDCCQ). Asn786 carries an N-linked (GlcNAc...) asparagine glycan. An LDL-receptor class A domain is found at 819–859 (CCQEKYGKFKCDNNKCISLSRVCDGNDDCRNAEDESKSRCK).

In terms of assembly, monomer. In terms of tissue distribution, expressed by the salivary gland.

Its subcellular location is the secreted. This is SE-cephalotoxin from Acanthosepion esculentum (Golden cuttlefish).